The following is a 133-amino-acid chain: ATP synthase epsilon chain (133 aa).

Belongs to the ATPase epsilon chain family. In terms of assembly, F-type ATPases have 2 components, CF(1) - the catalytic core - and CF(0) - the membrane proton channel. CF(1) has five subunits: alpha(3), beta(3), gamma(1), delta(1), epsilon(1). CF(0) has three main subunits: a, b and c.

It localises to the cell inner membrane. In terms of biological role, produces ATP from ADP in the presence of a proton gradient across the membrane. The protein is ATP synthase epsilon chain of Paramagnetospirillum magneticum (strain ATCC 700264 / AMB-1) (Magnetospirillum magneticum).